The chain runs to 870 residues: Leucine--tRNA ligase (870 aa).

Residues 42–52 (PYPSGKLHMGH) carry the 'HIGH' region motif. The short motif at 629-633 (KMSKS) is the 'KMSKS' region element. Residue K632 coordinates ATP.

This sequence belongs to the class-I aminoacyl-tRNA synthetase family.

It localises to the cytoplasm. It catalyses the reaction tRNA(Leu) + L-leucine + ATP = L-leucyl-tRNA(Leu) + AMP + diphosphate. In Ectopseudomonas mendocina (strain ymp) (Pseudomonas mendocina), this protein is Leucine--tRNA ligase.